The sequence spans 408 residues: Peptidase T-like protein RB0614 (408 aa).

A Zn(2+)-binding site is contributed by histidine 80. Aspartate 82 is an active-site residue. Zn(2+) is bound at residue aspartate 142. Glutamate 174 acts as the Proton acceptor in catalysis. 3 residues coordinate Zn(2+): glutamate 175, aspartate 198, and histidine 380.

It belongs to the peptidase M20B family. Requires Zn(2+) as cofactor.

This is Peptidase T-like protein RB0614 from Rhizobium meliloti (strain 1021) (Ensifer meliloti).